The primary structure comprises 223 residues: ATP-dependent dethiobiotin synthetase BioD (223 aa).

Threonine 16 is a binding site for Mg(2+). Lysine 37 is an active-site residue. Residue serine 41 participates in substrate binding. Mg(2+) is bound by residues aspartate 50 and glutamate 111. Residues aspartate 50, 111–114, and 171–172 contribute to the ATP site; these read EGAG and NR.

This sequence belongs to the dethiobiotin synthetase family. Homodimer. Mg(2+) serves as cofactor.

Its subcellular location is the cytoplasm. The catalysed reaction is (7R,8S)-7,8-diammoniononanoate + CO2 + ATP = (4R,5S)-dethiobiotin + ADP + phosphate + 3 H(+). The protein operates within cofactor biosynthesis; biotin biosynthesis; biotin from 7,8-diaminononanoate: step 1/2. Functionally, catalyzes a mechanistically unusual reaction, the ATP-dependent insertion of CO2 between the N7 and N8 nitrogen atoms of 7,8-diaminopelargonic acid (DAPA, also called 7,8-diammoniononanoate) to form a ureido ring. The polypeptide is ATP-dependent dethiobiotin synthetase BioD (Anaeromyxobacter dehalogenans (strain 2CP-C)).